We begin with the raw amino-acid sequence, 983 residues long: UPF0182 protein KRH_08700 (983 aa).

The next 7 membrane-spanning stretches (helical) occupy residues 22 to 42, 67 to 87, 116 to 136, 172 to 192, 213 to 233, 261 to 281, and 288 to 308; these read GALL…VGFT, VIGL…LSLW, VVMV…VATQ, LLIG…LLMH, VHLG…FWLD, GILA…GFIG, and IGAA…PWAI. The tract at residues 893–959 is disordered; the sequence is GAKTDTGAGV…DKAMKDGDWT (67 aa). Residues 947-959 show a composition bias toward basic and acidic residues; the sequence is QDSDKAMKDGDWT.

Belongs to the UPF0182 family.

Its subcellular location is the cell membrane. The protein is UPF0182 protein KRH_08700 of Kocuria rhizophila (strain ATCC 9341 / DSM 348 / NBRC 103217 / DC2201).